We begin with the raw amino-acid sequence, 345 residues long: Phosphoribosylformylglycinamidine cyclo-ligase (345 aa).

It belongs to the AIR synthase family.

The protein localises to the cytoplasm. It catalyses the reaction 2-formamido-N(1)-(5-O-phospho-beta-D-ribosyl)acetamidine + ATP = 5-amino-1-(5-phospho-beta-D-ribosyl)imidazole + ADP + phosphate + H(+). It functions in the pathway purine metabolism; IMP biosynthesis via de novo pathway; 5-amino-1-(5-phospho-D-ribosyl)imidazole from N(2)-formyl-N(1)-(5-phospho-D-ribosyl)glycinamide: step 2/2. The protein is Phosphoribosylformylglycinamidine cyclo-ligase of Salmonella typhi.